The sequence spans 203 residues: Mpv17-like protein (203 aa).

The Cytoplasmic portion of the chain corresponds to 1 to 12 (MRILIQFTKRHP). The chain crosses the membrane as a helical span at residues 13 to 30 (WLTNVTIYGSLFASADIV). Residues 31–49 (QQKLSKSPTEPIDFKQTAK) are Lumenal-facing. A helical transmembrane segment spans residues 50–69 (VGLVGFCFHANFNFFWLRFI). The Cytoplasmic segment spans residues 70–89 (ERTFPGSAPLNVIRKVACDQ). Residues 90 to 107 (LMAAPITISAFYTGLSLL) traverse the membrane as a helical segment. The Lumenal portion of the chain corresponds to 108–143 (DGERDVFKNLKEKFWPTYKTGVMCWTVFQTINFSVI). A helical transmembrane segment spans residues 144-166 (PPFVRTAYIGVCAFLWTTFLCYI). At 167-203 (RNRDINEVTTRLLHAVPNIRGKMAFPQDQDDNKPADK) the chain is on the cytoplasmic side.

It belongs to the peroxisomal membrane protein PXMP2/4 family.

Its subcellular location is the peroxisome membrane. Its function is as follows. Participates in reactive oxygen species metabolism by up- or down-regulation of the genes of antioxidant enzymes. Protective against the mitochondrial apoptotic cascade. The chain is Mpv17-like protein (mpv17l) from Xenopus laevis (African clawed frog).